The primary structure comprises 136 residues: Holo-[acyl-carrier-protein] synthase (136 aa).

2 residues coordinate Mg(2+): D8 and E58.

It belongs to the P-Pant transferase superfamily. AcpS family. Requires Mg(2+) as cofactor.

It localises to the cytoplasm. The enzyme catalyses apo-[ACP] + CoA = holo-[ACP] + adenosine 3',5'-bisphosphate + H(+). Its function is as follows. Transfers the 4'-phosphopantetheine moiety from coenzyme A to a Ser of acyl-carrier-protein. The chain is Holo-[acyl-carrier-protein] synthase from Leuconostoc mesenteroides subsp. mesenteroides (strain ATCC 8293 / DSM 20343 / BCRC 11652 / CCM 1803 / JCM 6124 / NCDO 523 / NBRC 100496 / NCIMB 8023 / NCTC 12954 / NRRL B-1118 / 37Y).